Consider the following 241-residue polypeptide: Probable GTP-binding protein EngB (241 aa).

An EngB-type G domain is found at 56–240 (GPVEIAFAGR…RAAIALLLKE (185 aa)). Residues 64–71 (GRSNVGKS), 91–95 (GRTQE), 118–121 (DMPG), 185–188 (TKID), and 219–221 (TSS) contribute to the GTP site. Ser71 and Thr93 together coordinate Mg(2+).

This sequence belongs to the TRAFAC class TrmE-Era-EngA-EngB-Septin-like GTPase superfamily. EngB GTPase family. Mg(2+) is required as a cofactor.

Its function is as follows. Necessary for normal cell division and for the maintenance of normal septation. This is Probable GTP-binding protein EngB from Brucella suis biovar 1 (strain 1330).